The primary structure comprises 358 residues: Feruloyl CoA ortho-hydroxylase F6H1-3 (358 aa).

Positions 200–308 (TKESLLMGSK…RISVPIFVNP (109 aa)) constitute a Fe2OG dioxygenase domain. Y216 serves as a coordination point for 2-oxoglutarate. Positions 231, 233, and 289 each coordinate Fe cation. 2-oxoglutarate contacts are provided by R299 and S301.

Belongs to the iron/ascorbate-dependent oxidoreductase family. It depends on L-ascorbate as a cofactor. Requires Fe(2+) as cofactor. Mostly expressed in tubers, and, at low levels, in underground stems, stems, leaves and petioles.

It carries out the reaction (E)-feruloyl-CoA + 2-oxoglutarate + O2 = (E)-6-hydroxyferuloyl-CoA + succinate + CO2. It functions in the pathway phenylpropanoid metabolism. 2-oxoglutarate (OG)- and Fe(II)-dependent dioxygenase (2OGD) involved in scopoletin biosynthesis. Converts feruloyl CoA into 6'-hydroxyferuloyl CoA, and, at low efficiency, caffeoyl-CoA into 6'-hydroxycaffeate, but has no activity with p-coumaroyl-CoA. This chain is Feruloyl CoA ortho-hydroxylase F6H1-3, found in Ipomoea batatas (Sweet potato).